The primary structure comprises 137 residues: Cellular retinoic acid-binding protein 1 (137 aa).

The short motif at 21-31 (KALGVNAMLRK) is the Nuclear localization signal element. 132–134 (RIY) is a binding site for all-trans-retinoate.

This sequence belongs to the calycin superfamily. Fatty-acid binding protein (FABP) family.

The protein localises to the cytoplasm. Its function is as follows. Cytosolic CRABPs may regulate the access of retinoic acid to the nuclear retinoic acid receptors. The chain is Cellular retinoic acid-binding protein 1 (CRABP1) from Homo sapiens (Human).